Here is a 706-residue protein sequence, read N- to C-terminus: Termination factor NPH-I homolog (706 aa).

The region spanning 62–227 is the Helicase ATP-binding domain; sequence IGQGENTRGL…VPCFNMLSGR (166 aa). 75–82 contributes to the ATP binding site; sequence HQMGMGKT. Positions 168-171 match the DEAH box motif; that stretch reads DEAH. The 183-residue stretch at 417-599 folds into the Helicase C-terminal domain; sequence QCLQPLKVLE…HLNSAFRDLL (183 aa).

This sequence belongs to the DEAD box helicase family. DEAH subfamily. As to quaternary structure, part of the viral DNA-directed RNA polymerase that consists of 8 polII-like subunits (RPB1, RPB2, RPB3, RPB5, RPB6, RPB7, RPB9, RPB10), a capping enzyme and a termination factor.

It localises to the virion. In terms of biological role, putative DNA-dependent ATPase required for providing the needed energy to achieve the termination of early transcripts. This chain is Termination factor NPH-I homolog, found in African swine fever virus (isolate Warthog/Namibia/Wart80/1980) (ASFV).